Reading from the N-terminus, the 553-residue chain is Solute carrier family 22 member 2 (553 aa).

Topologically, residues 1–21 are cytoplasmic; that stretch reads MPTVDDILEHIGEFHLFQKQT. A helical membrane pass occupies residues 22–42; sequence FFLLALLSGAFTPIYVGIVFL. Topologically, residues 43–150 are extracellular; the sequence is GFTPNHHCRS…LVCAHSWMLD (108 aa). N71 carries N-linked (GlcNAc...) asparagine glycosylation. Residues 151-171 form a helical membrane-spanning segment; the sequence is LFQSLVNVGFFIGAVGIGYLA. The Cytoplasmic portion of the chain corresponds to 172 to 177; it reads DRFGRK. Residues 178 to 198 form a helical membrane-spanning segment; sequence FCLLVTILINAISGVLMAISP. Topologically, residues 199–210 are extracellular; the sequence is NYAWMLVFRFLQ. The helical transmembrane segment at 211–231 threads the bilayer; the sequence is GLVSKAGWLIGYILITEFVGL. Residues 232 to 238 lie on the Cytoplasmic side of the membrane; sequence GYRRTVG. A helical membrane pass occupies residues 239–259; that stretch reads ICYQIAFTVGLLILAGVAYAL. Residues 260–263 lie on the Extracellular side of the membrane; sequence PNWR. Residues 264 to 284 traverse the membrane as a helical segment; it reads WLQFAVTLPNFCFLLYFWCIP. A Proline-rich sequence motif is present at residues 284–288; that stretch reads PESPR. At 285–348 the chain is on the cytoplasmic side; sequence ESPRWLISQN…VRTPQIRKHT (64 aa). A helical transmembrane segment spans residues 349 to 369; it reads LILMYNWFTSSVLYQGLIMHM. Residues 370–375 lie on the Extracellular side of the membrane; it reads GLAGDN. Residues 376–396 form a helical membrane-spanning segment; it reads IYLDFFYSALVEFPAAFIIIL. Topologically, residues 397–404 are cytoplasmic; that stretch reads TIDRIGRR. Residues 405–425 traverse the membrane as a helical segment; sequence YPWAVSNMVAGAACLASVFIP. Topologically, residues 426–432 are extracellular; the sequence is DDLQWLK. A helical membrane pass occupies residues 433 to 453; the sequence is ITVACLGRMGITIAYEMVCLV. The Cytoplasmic portion of the chain corresponds to 454-464; sequence NAELYPTYIRN. A helical transmembrane segment spans residues 465–485; the sequence is LAVLVCSSMCDIGGIVTPFLV. The Extracellular segment spans residues 486-494; the sequence is YRLTDIWLE. Residues 495–515 form a helical membrane-spanning segment; that stretch reads FPLVVFAVVGLVAGGLVLLLP. Over 516–553 the chain is Cytoplasmic; that stretch reads ETKGKALPETIEDAEKMQRPRKKKEKRIYLQVKKAELS.

This sequence belongs to the major facilitator (TC 2.A.1) superfamily. Organic cation transporter (TC 2.A.1.19) family. In terms of processing, tyrosine phosphorylated by tyrosine-protein kinase YES1. Expressed in kidney and ureter. To a lower extent, also expressed in brain and embryo.

Its subcellular location is the basolateral cell membrane. The protein localises to the basal cell membrane. It localises to the apical cell membrane. The enzyme catalyses (R)-noradrenaline(out) = (R)-noradrenaline(in). It catalyses the reaction (R)-adrenaline(out) = (R)-adrenaline(in). The catalysed reaction is serotonin(out) = serotonin(in). It carries out the reaction dopamine(out) = dopamine(in). The enzyme catalyses histamine(out) = histamine(in). It catalyses the reaction thiamine(in) = thiamine(out). The catalysed reaction is creatinine(in) = creatinine(out). It carries out the reaction 1-methylnicotinamide(out) = 1-methylnicotinamide(in). The enzyme catalyses guanidine(out) = guanidine(in). It catalyses the reaction choline(out) = choline(in). The catalysed reaction is agmatine(out) = agmatine(in). It carries out the reaction putrescine(out) = putrescine(in). The enzyme catalyses spermidine(in) = spermidine(out). It catalyses the reaction tyramine(in) = tyramine(out). The catalysed reaction is L-histidyl-L-proline diketopiperazine(in) = L-histidyl-L-proline diketopiperazine(out). It carries out the reaction (R)-salsolinol(in) = (R)-salsolinol(out). The enzyme catalyses N-methyl-(R)-salsolinol(in) = N-methyl-(R)-salsolinol(out). It catalyses the reaction acetylcholine(in) = acetylcholine(out). The catalysed reaction is prostaglandin F2alpha(out) = prostaglandin F2alpha(in). It carries out the reaction prostaglandin E2(out) = prostaglandin E2(in). Tyrosine phosphorylation of the transporter leads to activation of the transport activity. TEA uptake is activated by tyrosine phosphorylation. Inhibited by cGMP, most likely through a cGMP-binding protein that interacts with OCT2. In terms of biological role, electrogenic voltage-dependent transporter that mediates the transport of a variety of organic cations such as endogenous bioactive amines, cationic drugs and xenobiotics. Functions as a Na(+)-independent, bidirectional uniporter. Cation cellular uptake or release is driven by the electrochemical potential, i.e. membrane potential and concentration gradient. However, may also engage electroneutral cation exchange when saturating concentrations of cation substrates are reached. Predominantly expressed at the basolateral membrane of hepatocytes and proximal tubules and involved in the uptake and disposition of cationic compounds by hepatic and renal clearance from the blood flow. Implicated in monoamine neurotransmitters uptake such as histamine, dopamine, adrenaline/epinephrine, noradrenaline/norepinephrine, serotonin and tyramine, thereby supporting a physiological role in the central nervous system by regulating interstitial concentrations of neurotransmitters. Also capable of transporting dopaminergic neuromodulators cyclo(his-pro), salsolinol and N-methyl-salsolinol, thereby involved in the maintenance of dopaminergic cell integrity in the central nervous system. Mediates the bidirectional transport of acetylcholine (ACh) at the apical membrane of ciliated cell in airway epithelium, thereby playing a role in luminal release of ACh from bronchial epithelium. Also transports guanidine and endogenous monoamines such as vitamin B1/thiamine, creatinine and N-1-methylnicotinamide (NMN). Mediates the uptake and efflux of quaternary ammonium compound choline. Mediates the bidirectional transport of polyamine agmatine and the uptake of polyamines putrescine and spermidine. Able to transport non-amine endogenous compounds such as prostaglandin E2 (PGE2) and prostaglandin F2-alpha (PGF2-alpha). Also involved in the uptake of xenobiotic 4-(4-(dimethylamino)styryl)-N-methylpyridinium (ASP). May contribute to regulate the transport of organic compounds in testis across the blood-testis-barrier. In Mus musculus (Mouse), this protein is Solute carrier family 22 member 2.